The following is a 101-amino-acid chain: MAEKTLTRMDLSDAVFREVGLSRNESAQLVESILTHMSDALVRGESVKISSFGTFSVRDKSARIGRNPKTGEEVPIHPRRVLTFRPSHLMKERVANGNRNR.

The protein belongs to the bacterial histone-like protein family. As to quaternary structure, heterodimer of an alpha and a beta chain.

This protein is one of the two subunits of integration host factor, a specific DNA-binding protein that functions in genetic recombination as well as in transcriptional and translational control. The protein is Integration host factor subunit alpha of Dinoroseobacter shibae (strain DSM 16493 / NCIMB 14021 / DFL 12).